A 105-amino-acid chain; its full sequence is Vacuolar ATPase assembly integral membrane protein VMA21 homolog (105 aa).

The tract at residues 1–26 is disordered; that stretch reads MSTKNKKAAGGNGGAPKQTRQQSHDS. Residues 1–36 are Cytoplasmic-facing; sequence MSTKNKKAAGGNGGAPKQTRQQSHDSQDYSSFKTVL. Residues 37–57 form a helical membrane-spanning segment; that stretch reads FYCMLIVFLPVLTFFVLKGFV. Residues 58 to 68 are Lumenal-facing; that stretch reads LDQFLDISEVK. Residues 69–89 traverse the membrane as a helical segment; sequence VNIASAVGAVVALHIALGLYI. Residues 90-105 are Cytoplasmic-facing; that stretch reads YRAYFGTTGSKASKTD.

The protein belongs to the VMA21 family.

The protein resides in the endoplasmic reticulum membrane. It localises to the endoplasmic reticulum-Golgi intermediate compartment membrane. Its subcellular location is the cytoplasmic vesicle. It is found in the COPII-coated vesicle membrane. Its function is as follows. Required for the assembly of the V0 complex of the vacuolar ATPase (V-ATPase) in the endoplasmic reticulum. In Drosophila erecta (Fruit fly), this protein is Vacuolar ATPase assembly integral membrane protein VMA21 homolog.